A 429-amino-acid polypeptide reads, in one-letter code: Patatin-like phospholipase domain-containing protein 5 (429 aa).

The PNPLA domain occupies 12-181 (LSFSGAGYLG…SNNLPFADCP (170 aa)). The GXGXXG motif lies at 16–21 (GAGYLG). Positions 47-51 (GSSSG) match the GXSXG motif. Ser-49 (nucleophile) is an active-site residue. Catalysis depends on Asp-168, which acts as the Proton acceptor. Residues 168-170 (DGA) carry the DGA/G motif.

As to expression, expressed in brain and pituitary gland.

The enzyme catalyses a triacylglycerol + H2O = a diacylglycerol + a fatty acid + H(+). Its function is as follows. Has abundant triacylglycerol lipase activity. The sequence is that of Patatin-like phospholipase domain-containing protein 5 from Homo sapiens (Human).